Here is a 92-residue protein sequence, read N- to C-terminus: Large ribosomal subunit protein bL25 (92 aa).

Belongs to the bacterial ribosomal protein bL25 family. As to quaternary structure, part of the 50S ribosomal subunit; part of the 5S rRNA/L5/L18/L25 subcomplex. Contacts the 5S rRNA. Binds to the 5S rRNA independently of L5 and L18.

In terms of biological role, this is one of the proteins that binds to the 5S RNA in the ribosome where it forms part of the central protuberance. In Aliivibrio fischeri (strain MJ11) (Vibrio fischeri), this protein is Large ribosomal subunit protein bL25.